The sequence spans 80 residues: Antitoxin VapB15 (80 aa).

The tract at residues 60–80 (DFSNDEIESFSDTDRKLADES) is disordered. Glutamate 67 provides a ligand contact to Mg(2+). Residue glutamate 67 coordinates Mn(2+). A compositionally biased stretch (basic and acidic residues) spans 71–80 (DTDRKLADES).

Forms a VapB15-VapC15(2) heterotrimer and a VapB15(2)-VapC15(2) heterotetramer; each toxin pair forms a homodimer which creates a channel in which the antitoxin binds. It depends on Mg(2+) as a cofactor. Requires Mn(2+) as cofactor.

Antitoxin component of a type II toxin-antitoxin (TA) system. Neutralizes the toxic effect of cognate toxin VapC15. The polypeptide is Antitoxin VapB15 (vapB15) (Mycobacterium tuberculosis (strain CDC 1551 / Oshkosh)).